We begin with the raw amino-acid sequence, 86 residues long: Toxin TdNa7 (86 aa).

An N-terminal signal peptide occupies residues methionine 1–cysteine 20. Positions lysine 21–glycine 83 constitute an LCN-type CS-alpha/beta domain. 4 cysteine pairs are disulfide-bonded: cysteine 31-cysteine 82, cysteine 35-cysteine 57, cysteine 43-cysteine 63, and cysteine 47-cysteine 65. Lysine 84 is modified (lysine amide).

This sequence belongs to the long (4 C-C) scorpion toxin superfamily. Sodium channel inhibitor family. Beta subfamily. As to expression, expressed by the venom gland.

The protein resides in the secreted. Beta toxins bind voltage-independently at site-4 of sodium channels (Nav) and shift the voltage of activation toward more negative potentials thereby affecting sodium channel activation and promoting spontaneous and repetitive firing. The polypeptide is Toxin TdNa7 (Tityus discrepans (Venezuelan scorpion)).